The following is a 400-amino-acid chain: AA13 family lytic polysaccharide monooxygenase A (400 aa).

The first 17 residues, 1–17, serve as a signal peptide directing secretion; the sequence is MLLTVLAVVGCFTAVNG. Position 18 (H18) interacts with Cu(2+). Methylhistidine is present on H18. In terms of domain architecture, Chitin-binding type-4 spans 18–247; that stretch reads HGYLTIPASR…AQVYLHCADI (230 aa). Intrachain disulfides connect C39–C42, C65–C244, C101–C202, C117–C144, C152–C160, C166–C172, and C180–C191. H108 lines the Cu(2+) pocket. N119 carries an N-linked (GlcNAc...) asparagine glycan. Y241 contacts Cu(2+). A disordered region spans residues 254–287; that stretch reads GGTTSKSTTSTTSTTSTSRSTSTSAPTTTSSAST. Positions 257-287 are enriched in low complexity; it reads TSKSTTSTTSTTSTSRSTSTSAPTTTSSAST. One can recognise a CBM20 domain in the interval 293-400; the sequence is TTQASLIPVT…TTATAAASWR (108 aa). An N-linked (GlcNAc...) asparagine glycan is attached at N379.

It belongs to the polysaccharide monooxygenase AA13 family. It depends on Cu(2+) as a cofactor. Post-translationally, O-mannosylated.

Its subcellular location is the secreted. The enzyme catalyses starch + reduced acceptor + O2 = D-glucono-1,5-lactone-terminated malto-oligosaccharides + short-chain malto-oligosaccharides + acceptor + H2O.. With respect to regulation, activity is inhibited by both beta-cyclodextrin or amylose that block the access to the active site. Functionally, starch-active lytic polysaccharide monooxygenase that oxidizes the C1 position of starch substrates. Catalysis by LPMOs requires the reduction of the active-site copper from Cu(II) to Cu(I) by a reducing agent and H(2)O(2) or O(2) as a cosubstrate. The chain is AA13 family lytic polysaccharide monooxygenase A from Aspergillus terreus (strain NIH 2624 / FGSC A1156).